A 1381-amino-acid polypeptide reads, in one-letter code: DNA-directed RNA polymerase subunit beta'' (1381 aa).

4 residues coordinate Zn(2+): C224, C295, C302, and C305.

The protein belongs to the RNA polymerase beta' chain family. RpoC2 subfamily. In terms of assembly, in plastids the minimal PEP RNA polymerase catalytic core is composed of four subunits: alpha, beta, beta', and beta''. When a (nuclear-encoded) sigma factor is associated with the core the holoenzyme is formed, which can initiate transcription. The cofactor is Zn(2+).

Its subcellular location is the plastid. It is found in the chloroplast. The enzyme catalyses RNA(n) + a ribonucleoside 5'-triphosphate = RNA(n+1) + diphosphate. DNA-dependent RNA polymerase catalyzes the transcription of DNA into RNA using the four ribonucleoside triphosphates as substrates. This Lactuca sativa (Garden lettuce) protein is DNA-directed RNA polymerase subunit beta''.